The sequence spans 752 residues: Putative xanthine dehydrogenase molybdenum-binding subunit XdhA (752 aa).

Gln206, Phe237, Arg350, and Ala516 together coordinate Mo-molybdopterin.

This sequence belongs to the xanthine dehydrogenase family. In terms of assembly, heterotrimer of XdhA, XdhB and XdhC. Requires Mo-molybdopterin as cofactor.

It catalyses the reaction xanthine + NAD(+) + H2O = urate + NADH + H(+). The enzyme catalyses hypoxanthine + NAD(+) + H2O = xanthine + NADH + H(+). Its pathway is purine metabolism; hypoxanthine degradation; urate from hypoxanthine: step 1/2. It participates in purine metabolism; hypoxanthine degradation; urate from hypoxanthine: step 2/2. Its function is as follows. Presumed to be a dehydrogenase, but possibly an oxidase. Participates in limited purine salvage (requires aspartate) but does not support aerobic growth on purines as the sole carbon source (purine catabolism). Deletion results in increased adenine sensitivity, suggesting that this protein contributes to the conversion of adenine to guanine nucleotides during purine salvage. The chain is Putative xanthine dehydrogenase molybdenum-binding subunit XdhA (xdhA) from Escherichia coli (strain K12).